Here is a 217-residue protein sequence, read N- to C-terminus: Adenylate kinase (217 aa).

10 to 15 serves as a coordination point for ATP; the sequence is GAGKGT. The interval 30 to 59 is NMP; it reads STGDMFRAAMKEETPLGLEAKSYIDKGELV. AMP contacts are provided by residues threonine 31, arginine 36, 57 to 59, 85 to 88, and glutamine 92; these read ELV and GFPR. Residues 126 to 163 form an LID region; sequence GRRICSVCGTTYHLVFNPPKTPGVCDKDGGDLYQRADD. Arginine 127 serves as a coordination point for ATP. The Zn(2+) site is built by cysteine 130 and cysteine 133. 136–137 contacts ATP; it reads TY. 2 residues coordinate Zn(2+): cysteine 150 and aspartate 153. Residues arginine 160 and arginine 171 each contribute to the AMP site. ATP is bound at residue glutamine 199.

This sequence belongs to the adenylate kinase family. Monomer.

The protein resides in the cytoplasm. It catalyses the reaction AMP + ATP = 2 ADP. The protein operates within purine metabolism; AMP biosynthesis via salvage pathway; AMP from ADP: step 1/1. Functionally, catalyzes the reversible transfer of the terminal phosphate group between ATP and AMP. Plays an important role in cellular energy homeostasis and in adenine nucleotide metabolism. This chain is Adenylate kinase, found in Bacillus velezensis (strain DSM 23117 / BGSC 10A6 / LMG 26770 / FZB42) (Bacillus amyloliquefaciens subsp. plantarum).